Consider the following 81-residue polypeptide: U12-hexatoxin-Mg1a (81 aa).

A signal peptide spans 1-24; it reads MKAPATIVILIMSLISVLWATADT. A propeptide spanning residues 25-50 is cleaved from the precursor; that stretch reads EDGNLLFPIEDFIRKFDEYPVQPKER. 3 disulfide bridges follow: cysteine 52/cysteine 66, cysteine 59/cysteine 71, and cysteine 65/cysteine 75. Proline 78 is modified (proline amide).

Expressed by the venom gland.

The protein resides in the secreted. Its function is as follows. Blocks voltage-gated sodium channels (Nav). Intracranial injection into mice causes lacrimation, slow breathing and death. Intrathorax injection into crickets causes death. This chain is U12-hexatoxin-Mg1a, found in Macrothele gigas (Japanese funnel web spider).